A 303-amino-acid chain; its full sequence is UDP-3-O-acyl-N-acetylglucosamine deacetylase (303 aa).

3 residues coordinate Zn(2+): His-79, His-238, and Asp-242. Catalysis depends on His-265, which acts as the Proton donor.

Belongs to the LpxC family. Zn(2+) is required as a cofactor.

It carries out the reaction a UDP-3-O-[(3R)-3-hydroxyacyl]-N-acetyl-alpha-D-glucosamine + H2O = a UDP-3-O-[(3R)-3-hydroxyacyl]-alpha-D-glucosamine + acetate. It participates in glycolipid biosynthesis; lipid IV(A) biosynthesis; lipid IV(A) from (3R)-3-hydroxytetradecanoyl-[acyl-carrier-protein] and UDP-N-acetyl-alpha-D-glucosamine: step 2/6. Catalyzes the hydrolysis of UDP-3-O-myristoyl-N-acetylglucosamine to form UDP-3-O-myristoylglucosamine and acetate, the committed step in lipid A biosynthesis. This is UDP-3-O-acyl-N-acetylglucosamine deacetylase from Pseudoalteromonas translucida (strain TAC 125).